A 487-amino-acid polypeptide reads, in one-letter code: UPF0324 membrane protein NE0724 (487 aa).

The next 11 membrane-spanning stretches (helical) occupy residues 19-38 (WAVWLGLIMFMASVSSLWGW), 71-93 (PALSLLVTYLVFTALTCLAAWSM), 100-119 (FFIGWTILFIMTWVIWIIGN), 139-161 (LSLGSGFSYLLALLVGLVIGNFF), 181-200 (AIVFLGIKIGVMSIEAAGFI), 204-226 (VMTGVAATFVAYMLFWPIVYALG), 269-291 (VSILVVIFAMFELIILPGFYTAI), 350-369 (IWIDMFIGVWAFVLALVWVY), 389-411 (FPKFVLGYLLVWFSYIMLASSGS), 426-443 (GPMRNMMFMLTFISIGII), and 456-478 (ALLYAIALFGIIAPIAYGVAWIF).

The protein belongs to the UPF0324 family.

It is found in the cell membrane. This Nitrosomonas europaea (strain ATCC 19718 / CIP 103999 / KCTC 2705 / NBRC 14298) protein is UPF0324 membrane protein NE0724.